Consider the following 384-residue polypeptide: PqqA peptide cyclase (384 aa).

One can recognise a Radical SAM core domain in the interval proline 15–glutamate 231. Residues cysteine 29, cysteine 33, and cysteine 36 each coordinate [4Fe-4S] cluster.

It belongs to the radical SAM superfamily. PqqE family. As to quaternary structure, interacts with PqqD. The interaction is necessary for activity of PqqE. The cofactor is [4Fe-4S] cluster.

It catalyses the reaction [PQQ precursor protein] + S-adenosyl-L-methionine = E-Y cross-linked-[PQQ precursor protein] + 5'-deoxyadenosine + L-methionine + H(+). The protein operates within cofactor biosynthesis; pyrroloquinoline quinone biosynthesis. Catalyzes the cross-linking of a glutamate residue and a tyrosine residue in the PqqA protein as part of the biosynthesis of pyrroloquinoline quinone (PQQ). The protein is PqqA peptide cyclase of Ectopseudomonas mendocina (strain ymp) (Pseudomonas mendocina).